The sequence spans 274 residues: HTH-type transcriptional regulator GadX (274 aa).

The HTH araC/xylS-type domain occupies 145 to 242 (TRVCTVINNN…GMTPTEYQER (98 aa)). 2 DNA-binding regions (H-T-H motif) span residues 162–183 (ARIASELLMSPSLLKKKLREEG) and 209–232 (IKRVAVSCGYHSVSYFIYVFRNYY).

As to quaternary structure, homodimer.

Functionally, positively regulates the expression of about fifteen genes involved in acid resistance such as gadA, gadB and gadC. Depending on the conditions (growth phase and medium), can repress gadW. Negatively regulates perA expression in acidic conditions and positively regulates it in alkaline conditions. This is HTH-type transcriptional regulator GadX (gadX) from Escherichia coli O127:H6 (strain E2348/69 / EPEC).